Here is a 356-residue protein sequence, read N- to C-terminus: Glutamine synthetase cytosolic isozyme 1-1 (356 aa).

Serine 2 carries the N-acetylserine modification. 2 positions are modified to phosphoserine: serine 2 and serine 48. The 81-residue stretch at 19–99 folds into the GS beta-grasp domain; that stretch reads IIAEYIWVGG…VMCDAYTPAG (81 aa). The segment at 36-62 is disordered; it reads KARTLPGPVTDPSQLPKWNYDGSSTGQ. The GS catalytic domain occupies 106–356; that stretch reads KRHAAAKVFS…IAETTILWNP (251 aa).

It belongs to the glutamine synthetase family. In terms of assembly, homooctamer. Interacts with CRK3 and GRF3. Phosphorylated by CRK3. As to expression, expressed in root tips, root hairs and epidermis. Ubiquitously expressed with higher levels in siliques and roots.

It localises to the cytoplasm. It carries out the reaction L-glutamate + NH4(+) + ATP = L-glutamine + ADP + phosphate + H(+). Functionally, high-affinity glutamine synthetase which catalyzes the synthesis of glutamine from ammonium and glutamate. May contribute to the homeostatic control of glutamine synthesis in roots. This Arabidopsis thaliana (Mouse-ear cress) protein is Glutamine synthetase cytosolic isozyme 1-1 (GLN1-1).